A 243-amino-acid polypeptide reads, in one-letter code: Proteasome subunit beta (243 aa).

Positions 1–46 are disordered; that stretch reads MFNPNNGSEFARNRARLDDTPNPYEPEVGSLPEGDRSQAGSDTVNK. Positions 1-48 are cleaved as a propeptide — removed in mature form; by autocatalysis; sequence MFNPNNGSEFARNRARLDDTPNPYEPEVGSLPEGDRSQAGSDTVNKTG. The active-site Nucleophile is the Thr-49.

It belongs to the peptidase T1B family. In terms of assembly, the 20S proteasome core is composed of 14 alpha and 14 beta subunits that assemble into four stacked heptameric rings, resulting in a barrel-shaped structure. The two inner rings, each composed of seven catalytic beta subunits, are sandwiched by two outer rings, each composed of seven alpha subunits. The catalytic chamber with the active sites is on the inside of the barrel. Has a gated structure, the ends of the cylinder being occluded by the N-termini of the alpha-subunits. Is capped at one or both ends by the proteasome regulatory ATPase, PAN.

It is found in the cytoplasm. It carries out the reaction Cleavage of peptide bonds with very broad specificity.. The formation of the proteasomal ATPase PAN-20S proteasome complex, via the docking of the C-termini of PAN into the intersubunit pockets in the alpha-rings, triggers opening of the gate for substrate entry. Interconversion between the open-gate and close-gate conformations leads to a dynamic regulation of the 20S proteasome proteolysis activity. Component of the proteasome core, a large protease complex with broad specificity involved in protein degradation. The chain is Proteasome subunit beta from Halobacterium salinarum (strain ATCC 29341 / DSM 671 / R1).